Reading from the N-terminus, the 607-residue chain is Heterocyst differentiation ATP-binding protein HepA (607 aa).

An ABC transmembrane type-1 domain is found at 32-330 (AILAVIFSFL…INGTVAFLST (299 aa)). Transmembrane regions (helical) follow at residues 33 to 53 (ILAVIFSFLAASFEGVSIGFL), 77 to 97 (ILAADAWPIPPIYRISLLILL), 163 to 182 (FSGLAFVLTRIMTVCVYFVV), 186 to 208 (ISWQLSIISVLIFLLLAVGLSTL), and 290 to 310 (IVISFATFTLPVASLLTFFFV). In terms of domain architecture, ABC transporter spans 364 to 598 (IDLVSVDFGY…RGKLWKYHQM (235 aa)). Residue 397-404 (GASGAGKT) coordinates ATP.

Belongs to the ABC transporter superfamily.

It localises to the cell inner membrane. Functionally, acts early in the process of morphological differentiation of heterocysts. The chain is Heterocyst differentiation ATP-binding protein HepA (hepA) from Nostoc sp. (strain PCC 7120 / SAG 25.82 / UTEX 2576).